Here is a 393-residue protein sequence, read N- to C-terminus: Prokineticin receptor 1 (393 aa).

Residues 1-62 are Extracellular-facing; that stretch reads METTVGTLGE…TNSRTFFAAK (62 aa). N-linked (GlcNAc...) asparagine glycosylation occurs at Asn11. The chain crosses the membrane as a helical span at residues 63–83; that stretch reads IVIGMALVGIMLVCGIGNFIF. Residues 84–98 lie on the Cytoplasmic side of the membrane; it reads ITALARYKKLRNLTN. Residues 99 to 119 traverse the membrane as a helical segment; sequence LLIANLAISDFLVAIVCCPFE. Residues 120 to 145 are Extracellular-facing; sequence MDYYVVRQLSWEHGHVLCASVNYLRT. Cys137 and Cys217 form a disulfide bridge. Residues 146–166 traverse the membrane as a helical segment; that stretch reads VSLYVSTNALLAIAIDRYLAI. The Cytoplasmic portion of the chain corresponds to 167–179; it reads VHPLRPRMKCQTA. The helical transmembrane segment at 180–200 threads the bilayer; the sequence is AGLIFLVWSVSILIAIPAAYF. Residues 201–232 are Extracellular-facing; it reads TTETVLVIVESQEKIFCGQIWPVDQQFYYRSY. The helical transmembrane segment at 233-253 threads the bilayer; sequence FLLVFGLEFVGPVIAMTLCYA. Over 254 to 282 the chain is Cytoplasmic; it reads RVSRELWFKAVPGFQTEQIRRRLRCRRRT. Residues 283 to 303 traverse the membrane as a helical segment; it reads VLGLVCVLSAYVLCWAPFYGF. At 304 to 322 the chain is on the extracellular side; the sequence is TIVRDFFPSVFVKEKHYLT. The helical transmembrane segment at 323–343 threads the bilayer; sequence AFYVVECIAMSNSMINTLCFV. Residues 344-393 are Cytoplasmic-facing; it reads TVRNNTSKYLKRILRLQWRASPSGSKASADLDLRTTGIPATEEVDCIRLK.

The protein belongs to the G-protein coupled receptor 1 family. Widely expressed in peripheral tissues with the highest level in the spleen and moderate levels in the adipose tissues, thymus, lung, kidney, testis, uterus and small intestine.

The protein resides in the cell membrane. Receptor for prokineticin 1. Exclusively coupled to the G(q) subclass of heteromeric G proteins. Activation leads to mobilization of calcium, stimulation of phosphoinositide turnover and activation of p44/p42 mitogen-activated protein kinase. May play a role during early pregnancy. This chain is Prokineticin receptor 1 (Prokr1), found in Rattus norvegicus (Rat).